The chain runs to 963 residues: Importin-13 (963 aa).

20 HEAT repeats span residues 24 to 54 (ENVE…QAQV), 56 to 88 (PQAW…KISR), 95 to 135 (TDQY…LSMM), 142 to 179 (AVAD…EFQT), 194 to 231 (LAVE…SWVQ), 236 to 268 (LQDC…NAIS), 276 to 325 (VNTL…ALLD), 330 to 372 (WQSF…DDIL), 375 to 438 (EAEK…YEML), 440 to 476 (AELL…FQSI), 487 to 522 (VVPG…WLAD), 524 to 558 (PVMI…CREC), 562 to 600 (LPPY…LLSA), 603 to 648 (VEEI…SNLF), 676 to 716 (PVVV…VKTL), 720 to 754 (FAPM…VHIF), 761 to 803 (FPPI…ALKR), 815 to 845 (VKAV…TELL), 860 to 893 (EDGR…FALN), and 897 to 931 (FSLL…QQIL). In terms of domain architecture, Importin N-terminal spans 45–111 (AQKWLMQAQV…KAQLFTQITR (67 aa)).

Belongs to the importin beta family. As to quaternary structure, interacts with UBC9, RAN, RBM8A, eIF-1A and PAX6. As to expression, expressed in fetal brain, heart, intestine and kidney.

It localises to the cytoplasm. Its subcellular location is the nucleus. Functionally, functions in nuclear protein import as nuclear transport receptor. Serves as receptor for nuclear localization signals (NLS) in cargo substrates. Is thought to mediate docking of the importin/substrate complex to the nuclear pore complex (NPC) through binding to nucleoporin and the complex is subsequently translocated through the pore by an energy requiring, Ran-dependent mechanism. At the nucleoplasmic side of the NPC, Ran binds to the importin, the importin/substrate complex dissociates and importin is re-exported from the nucleus to the cytoplasm where GTP hydrolysis releases Ran. The directionality of nuclear import is thought to be conferred by an asymmetric distribution of the GTP- and GDP-bound forms of Ran between the cytoplasm and nucleus. Mediates the nuclear import of UBC9, the RBM8A/MAGOH complex, PAX6 and probably other members of the paired homeobox family. Also mediates nuclear export of eIF-1A, and the cytoplasmic release of eIF-1A is triggered by the loading of import substrates onto IPO13. In Homo sapiens (Human), this protein is Importin-13 (IPO13).